A 394-amino-acid polypeptide reads, in one-letter code: 8-amino-7-oxononanoate synthase (394 aa).

Residue Arg21 participates in substrate binding. 112–113 (GY) lines the pyridoxal 5'-phosphate pocket. His137 is a binding site for substrate. Positions 183, 211, and 239 each coordinate pyridoxal 5'-phosphate. Position 242 is an N6-(pyridoxal phosphate)lysine (Lys242). Thr358 serves as a coordination point for substrate.

This sequence belongs to the class-II pyridoxal-phosphate-dependent aminotransferase family. BioF subfamily. Homodimer. It depends on pyridoxal 5'-phosphate as a cofactor.

It carries out the reaction 6-carboxyhexanoyl-[ACP] + L-alanine + H(+) = (8S)-8-amino-7-oxononanoate + holo-[ACP] + CO2. Its pathway is cofactor biosynthesis; biotin biosynthesis. Its function is as follows. Catalyzes the decarboxylative condensation of pimeloyl-[acyl-carrier protein] and L-alanine to produce 8-amino-7-oxononanoate (AON), [acyl-carrier protein], and carbon dioxide. The chain is 8-amino-7-oxononanoate synthase from Burkholderia thailandensis (strain ATCC 700388 / DSM 13276 / CCUG 48851 / CIP 106301 / E264).